The chain runs to 227 residues: 2,3-bisphosphoglycerate-dependent phosphoglycerate mutase (227 aa).

Residues 7–14, 20–21, arginine 59, 86–89, lysine 97, 113–114, and 182–183 each bind substrate; these read RHGFSEWN, TG, ERHY, RR, and GN. The active-site Tele-phosphohistidine intermediate is histidine 8. The Proton donor/acceptor role is filled by glutamate 86.

The protein belongs to the phosphoglycerate mutase family. BPG-dependent PGAM subfamily. Homodimer.

It carries out the reaction (2R)-2-phosphoglycerate = (2R)-3-phosphoglycerate. It functions in the pathway carbohydrate degradation; glycolysis; pyruvate from D-glyceraldehyde 3-phosphate: step 3/5. Its function is as follows. Catalyzes the interconversion of 2-phosphoglycerate and 3-phosphoglycerate. This Haemophilus influenzae (strain PittGG) protein is 2,3-bisphosphoglycerate-dependent phosphoglycerate mutase.